The chain runs to 24 residues: Conotoxin PIVE (24 aa).

Disulfide bonds link Cys2-Cys10, Cys3-Cys15, and Cys13-Cys19. The residue at position 24 (Lys24) is a Lysine amide.

Belongs to the conotoxin A superfamily. Expressed by the venom duct.

The protein localises to the secreted. Its function is as follows. Probable neurotoxin with ion channel inhibitor activity. In vivo, elicits dose-dependently excitatory activity upon injection into fish. Its action is slowly reversible. The polypeptide is Conotoxin PIVE (Conus purpurascens (Purple cone)).